Here is an 835-residue protein sequence, read N- to C-terminus: Leucine--tRNA ligase (835 aa).

Positions 41 to 52 match the 'HIGH' region motif; the sequence is PYPSGQGLHVGH. A 'KMSKS' region motif is present at residues 611-615; sequence KMSKS. An ATP-binding site is contributed by Lys-614.

Belongs to the class-I aminoacyl-tRNA synthetase family.

It localises to the cytoplasm. The enzyme catalyses tRNA(Leu) + L-leucine + ATP = L-leucyl-tRNA(Leu) + AMP + diphosphate. This Elusimicrobium minutum (strain Pei191) protein is Leucine--tRNA ligase.